Here is a 225-residue protein sequence, read N- to C-terminus: UPF0173 metal-dependent hydrolase Aflv_0488 (225 aa).

Belongs to the UPF0173 family.

The sequence is that of UPF0173 metal-dependent hydrolase Aflv_0488 from Anoxybacillus flavithermus (strain DSM 21510 / WK1).